A 389-amino-acid polypeptide reads, in one-letter code: 5-hydroxytryptamine receptor 1B (389 aa).

Positions 1-27 are disordered; it reads MEAAGAPCAPPPPAGSQTGAPPANLSS. The Extracellular portion of the chain corresponds to 1–45; the sequence is MEAAGAPCAPPPPAGSQTGAPPANLSSAPHNCSAEGYIYQDSVAL. Positions 16–27 are enriched in polar residues; the sequence is SQTGAPPANLSS. 2 N-linked (GlcNAc...) asparagine glycosylation sites follow: asparagine 24 and asparagine 31. The chain crosses the membrane as a helical span at residues 46–71; it reads PWKVLLVILLALITLATTLSNAFVIA. At 72-85 the chain is on the cytoplasmic side; the sequence is TVYRTRKLHTPANY. A helical membrane pass occupies residues 86–110; the sequence is LIASLAVTDLLVSILVMPISTMYTV. The Extracellular portion of the chain corresponds to 111–118; it reads TGRWTLGQ. Residues 119–144 form a helical membrane-spanning segment; that stretch reads VVCDLWLSSDITCCTASILHLCVIAL. A disulfide bridge connects residues cysteine 121 and cysteine 198. Ergotamine is bound by residues aspartate 128 and threonine 133. A DRY motif; important for ligand-induced conformation changes and signaling motif is present at residues 145–147; it reads DRY. The Cytoplasmic portion of the chain corresponds to 145-164; sequence DRYWAITDAVEYSAKRTPKR. Residues 165-183 traverse the membrane as a helical segment; sequence AAVMIALVWVFSISISLPP. The Extracellular portion of the chain corresponds to 184-204; it reads FFWRQAKAEEEVSDCVVNTDH. Valine 200 contacts ergotamine. A helical transmembrane segment spans residues 205–228; sequence ILYTVYSTVGAFYFPTLLLIALYG. The Cytoplasmic segment spans residues 229 to 314; it reads RIYVEARSRI…AARERKATKT (86 aa). Over residues 258-271 the composition is skewed to polar residues; the sequence is DSPGSTSSVTSVNS. The interval 258–281 is disordered; that stretch reads DSPGSTSSVTSVNSRAPDVPSESG. A helical membrane pass occupies residues 315–336; the sequence is LGIILGAFIVCWLPFFIISLVM. Topologically, residues 337–346 are extracellular; sequence PICKDACWFH. A helical transmembrane segment spans residues 347–369; the sequence is LAIFDFFTWLGYLNSLINPIIYT. Positions 364-368 match the NPxxY motif; important for ligand-induced conformation changes and signaling motif; sequence NPIIY. Residues 370–389 lie on the Cytoplasmic side of the membrane; sequence MSNEDFKQAFHKLIRFKCAG. Cysteine 387 is lipidated: S-palmitoyl cysteine.

The protein belongs to the G-protein coupled receptor 1 family. As to quaternary structure, homodimer. Heterodimer with HTR1D. Phosphorylated. Desensitization of the receptor may be mediated by its phosphorylation. Post-translationally, palmitoylated.

It localises to the cell membrane. G-protein coupled receptor for 5-hydroxytryptamine (serotonin). Also functions as a receptor for ergot alkaloid derivatives, various anxiolytic and antidepressant drugs and other psychoactive substances, such as lysergic acid diethylamide (LSD). Ligand binding causes a conformation change that triggers signaling via guanine nucleotide-binding proteins (G proteins) and modulates the activity of downstream effectors, such as adenylate cyclase. HTR1B is coupled to G(i)/G(o) G alpha proteins and mediates inhibitory neurotransmission by inhibiting adenylate cyclase activity. Arrestin family members inhibit signaling via G proteins and mediate activation of alternative signaling pathways. Regulates the release of 5-hydroxytryptamine, dopamine and acetylcholine in the brain, and thereby affects neural activity, nociceptive processing, pain perception, mood and behavior. Besides, plays a role in vasoconstriction of cerebral arteries. The sequence is that of 5-hydroxytryptamine receptor 1B (HTR1B) from Canis lupus familiaris (Dog).